We begin with the raw amino-acid sequence, 110 residues long: Acylphosphatase (110 aa).

The Acylphosphatase-like domain occupies 21-108 (TRRYLVTGRV…TNLKSFRIEG (88 aa)). Active-site residues include R36 and N54.

It belongs to the acylphosphatase family.

The catalysed reaction is an acyl phosphate + H2O = a carboxylate + phosphate + H(+). This is Acylphosphatase (acyP) from Koribacter versatilis (strain Ellin345).